The chain runs to 414 residues: Esterase FrsA (414 aa).

This sequence belongs to the FrsA family.

It carries out the reaction a carboxylic ester + H2O = an alcohol + a carboxylate + H(+). Catalyzes the hydrolysis of esters. The chain is Esterase FrsA from Shigella dysenteriae serotype 1 (strain Sd197).